A 663-amino-acid polypeptide reads, in one-letter code: MNDRISINLIYLVLTFCCVSAATVRTAKNDDIQKFTIQMIGYSPQKTDDYVAVSIEATPGYVVAFEPMAHADRVHHMLLYGCTMPASEQGFWRGMETCGWGGGSYILYAWARNAPNLVLPKDVAFSVGHEQDGIKYFVLQVHYAQPFAGEVHDFSGVTMHISQKKPMNLAAVMLFVSGTPIPPQLPAFQNNITCMFESSTPIHPFAFRTHTHAMGRLVSAFFKHDGHWTKIGKRNPQWPQLFEGIPSKLMIGSGDQMSASCRFDSMDKNRTVNMGAMGVDEMCNFYMMFHYDAKLDNPYPQGAICAKDYPSKMIDYPKDGFELLPSRPELEHHAHQSKVPFGIVQEAIHENLGGVKLGQVAGLAFNNEQQLLVFQRAGRVWDASTFDNYNILLDKKPIADPVILVISYSGNQTKLERKLGGGQFYLPHGIYVDKDGFVYTTDVGSHTVAKWKIEGNELKNIWTSGELLMPGSDQHHYCKPTGITRVEDQLYVTDGYCNSRVVVLDLNGKRIRQFGLPGEDAGQFNLPHDIVSDSAGRLLVTDRENGRVQHMTTQGHVIEEFKSTMFTNIYSAASHEDYVFMVPGRPIMGHETEGIAVFVGRSGTGLIEYAFGPTTKGKREQMGPQFGQPHCLRVCPDGGHIFVGDIAEGKARLWQFKIRHDQN.

The N-terminal stretch at 1-21 is a signal peptide; that stretch reads MNDRISINLIYLVLTFCCVSA. The segment at 1 to 300 is peptidylglycine alpha-hydroxylating monooxygenase; that stretch reads MNDRISINLI…YDAKLDNPYP (300 aa). 2 residues coordinate Cu(2+): H75 and H76. Residues C82 and C98 are joined by a disulfide bond. H142 contacts Cu(2+). The N-linked (GlcNAc...) asparagine glycan is linked to N191. 2 disulfides stabilise this stretch: C194–C305 and C261–C283. H210 and H212 together coordinate Cu(2+). A glycan (N-linked (GlcNAc...) asparagine) is linked at N269. M282 is a Cu(2+) binding site. The peptidyl-alpha-hydroxyglycine alpha-amidating lyase stretch occupies residues 301-663; that stretch reads QGAICAKDYP…WQFKIRHDQN (363 aa). Residue R376 coordinates a protein. N411 carries an N-linked (GlcNAc...) asparagine glycan. 4 NHL repeats span residues 411 to 454, 464 to 507, 511 to 554, and 626 to 656; these read NQTK…WKIE, SGEL…LDLN, IRQF…MTTQ, and FGQP…LWQF. C478 and C497 are joined by a disulfide. Positions 496 and 543 each coordinate a protein.

It in the C-terminal section; belongs to the peptidyl-alpha-hydroxyglycine alpha-amidating lyase family. The protein in the N-terminal section; belongs to the copper type II ascorbate-dependent monooxygenase family. Monomer. Requires Zn(2+) as cofactor. Cu(2+) is required as a cofactor.

The protein localises to the secreted. The enzyme catalyses a [peptide]-C-terminal glycine + 2 L-ascorbate + O2 = a [peptide]-C-terminal (2S)-2-hydroxyglycine + 2 monodehydro-L-ascorbate radical + H2O. It carries out the reaction a [peptide]-C-terminal (2S)-2-hydroxyglycine = a [peptide]-C-terminal amide + glyoxylate. Its function is as follows. Probable bifunctional enzyme that catalyzes 2 sequential steps in C-terminal alpha-amidation of peptides. The monooxygenase part produces an unstable peptidyl(2-hydroxyglycine) intermediate that is dismutated to glyoxylate and the corresponding desglycine peptide amide by the lyase part. C-terminal amidation of peptides such as neuropeptides is essential for full biological activity. In Caenorhabditis elegans, this protein is Probable peptidyl-glycine alpha-amidating monooxygenase pamn-1.